A 417-amino-acid polypeptide reads, in one-letter code: Serine hydroxymethyltransferase (417 aa).

Residues Leu-122 and 126–128 (GHL) each bind (6S)-5,6,7,8-tetrahydrofolate. Lys-230 is subject to N6-(pyridoxal phosphate)lysine. Residue 355-357 (SPF) participates in (6S)-5,6,7,8-tetrahydrofolate binding.

This sequence belongs to the SHMT family. In terms of assembly, homodimer. The cofactor is pyridoxal 5'-phosphate.

It localises to the cytoplasm. It carries out the reaction (6R)-5,10-methylene-5,6,7,8-tetrahydrofolate + glycine + H2O = (6S)-5,6,7,8-tetrahydrofolate + L-serine. It participates in one-carbon metabolism; tetrahydrofolate interconversion. It functions in the pathway amino-acid biosynthesis; glycine biosynthesis; glycine from L-serine: step 1/1. In terms of biological role, catalyzes the reversible interconversion of serine and glycine with tetrahydrofolate (THF) serving as the one-carbon carrier. This reaction serves as the major source of one-carbon groups required for the biosynthesis of purines, thymidylate, methionine, and other important biomolecules. Also exhibits THF-independent aldolase activity toward beta-hydroxyamino acids, producing glycine and aldehydes, via a retro-aldol mechanism. The chain is Serine hydroxymethyltransferase from Francisella tularensis subsp. mediasiatica (strain FSC147).